The following is a 196-amino-acid chain: ATP-dependent Clp protease proteolytic subunit (196 aa).

Ser-101 (nucleophile) is an active-site residue. His-126 is an active-site residue.

The protein belongs to the peptidase S14 family. As to quaternary structure, component of the chloroplastic Clp protease core complex.

Its subcellular location is the plastid. The protein resides in the chloroplast stroma. The catalysed reaction is Hydrolysis of proteins to small peptides in the presence of ATP and magnesium. alpha-casein is the usual test substrate. In the absence of ATP, only oligopeptides shorter than five residues are hydrolyzed (such as succinyl-Leu-Tyr-|-NHMec, and Leu-Tyr-Leu-|-Tyr-Trp, in which cleavage of the -Tyr-|-Leu- and -Tyr-|-Trp bonds also occurs).. Functionally, cleaves peptides in various proteins in a process that requires ATP hydrolysis. Has a chymotrypsin-like activity. Plays a major role in the degradation of misfolded proteins. This chain is ATP-dependent Clp protease proteolytic subunit, found in Barbarea verna (Land cress).